The chain runs to 407 residues: Phosphopentomutase (407 aa).

Residues Asp10, Asp306, His311, Asp347, His348, and His359 each contribute to the Mn(2+) site.

This sequence belongs to the phosphopentomutase family. Mn(2+) serves as cofactor.

Its subcellular location is the cytoplasm. The catalysed reaction is 2-deoxy-alpha-D-ribose 1-phosphate = 2-deoxy-D-ribose 5-phosphate. It carries out the reaction alpha-D-ribose 1-phosphate = D-ribose 5-phosphate. It participates in carbohydrate degradation; 2-deoxy-D-ribose 1-phosphate degradation; D-glyceraldehyde 3-phosphate and acetaldehyde from 2-deoxy-alpha-D-ribose 1-phosphate: step 1/2. Functionally, isomerase that catalyzes the conversion of deoxy-ribose 1-phosphate (dRib-1-P) and ribose 1-phosphate (Rib-1-P) to deoxy-ribose 5-phosphate (dRib-5-P) and ribose 5-phosphate (Rib-5-P), respectively. This is Phosphopentomutase from Photorhabdus laumondii subsp. laumondii (strain DSM 15139 / CIP 105565 / TT01) (Photorhabdus luminescens subsp. laumondii).